A 368-amino-acid chain; its full sequence is 1-deoxy-D-xylulose 5-phosphate reductoisomerase (368 aa).

Positions 9, 10, 11, 12, 35, and 106 each coordinate NADPH. Residue Lys-107 coordinates 1-deoxy-D-xylulose 5-phosphate. Glu-108 serves as a coordination point for NADPH. Asp-132 provides a ligand contact to Mn(2+). Residues Ser-133, Glu-134, Ser-158, and His-181 each contribute to the 1-deoxy-D-xylulose 5-phosphate site. Glu-134 serves as a coordination point for Mn(2+). NADPH is bound at residue Gly-187. 1-deoxy-D-xylulose 5-phosphate is bound by residues Ser-194, Asn-199, Lys-200, and Glu-203. Glu-203 lines the Mn(2+) pocket.

The protein belongs to the DXR family. It depends on Mg(2+) as a cofactor. Requires Mn(2+) as cofactor.

The catalysed reaction is 2-C-methyl-D-erythritol 4-phosphate + NADP(+) = 1-deoxy-D-xylulose 5-phosphate + NADPH + H(+). Its pathway is isoprenoid biosynthesis; isopentenyl diphosphate biosynthesis via DXP pathway; isopentenyl diphosphate from 1-deoxy-D-xylulose 5-phosphate: step 1/6. Catalyzes the NADPH-dependent rearrangement and reduction of 1-deoxy-D-xylulose-5-phosphate (DXP) to 2-C-methyl-D-erythritol 4-phosphate (MEP). This chain is 1-deoxy-D-xylulose 5-phosphate reductoisomerase, found in Mycoplasmoides gallisepticum (strain R(low / passage 15 / clone 2)) (Mycoplasma gallisepticum).